Here is a 200-residue protein sequence, read N- to C-terminus: Small ribosomal subunit protein uS4 (200 aa).

Residues 106 to 170 (RRLQTIVFKK…SPIANELHPI (65 aa)) form the S4 RNA-binding domain. The segment at 178–200 (AERVKEEAEKEAAASEDGGEQDE) is disordered. Residues 179-190 (ERVKEEAEKEAA) show a composition bias toward basic and acidic residues.

It belongs to the universal ribosomal protein uS4 family. In terms of assembly, part of the 30S ribosomal subunit. Contacts protein S5. The interaction surface between S4 and S5 is involved in control of translational fidelity.

One of the primary rRNA binding proteins, it binds directly to 16S rRNA where it nucleates assembly of the body of the 30S subunit. Functionally, with S5 and S12 plays an important role in translational accuracy. The protein is Small ribosomal subunit protein uS4 of Thermoplasma volcanium (strain ATCC 51530 / DSM 4299 / JCM 9571 / NBRC 15438 / GSS1).